Reading from the N-terminus, the 298-residue chain is Protoheme IX farnesyltransferase (298 aa).

The next 9 helical transmembrane spans lie at V28–V48, L50–I70, L95–A117, P121–Y138, N149–T169, A176–V196, C222–M242, T243–W263, and A274–V294.

The protein belongs to the UbiA prenyltransferase family. Protoheme IX farnesyltransferase subfamily.

It localises to the cell inner membrane. The catalysed reaction is heme b + (2E,6E)-farnesyl diphosphate + H2O = Fe(II)-heme o + diphosphate. Its pathway is porphyrin-containing compound metabolism; heme O biosynthesis; heme O from protoheme: step 1/1. Its function is as follows. Converts heme B (protoheme IX) to heme O by substitution of the vinyl group on carbon 2 of heme B porphyrin ring with a hydroxyethyl farnesyl side group. In Idiomarina loihiensis (strain ATCC BAA-735 / DSM 15497 / L2-TR), this protein is Protoheme IX farnesyltransferase.